Reading from the N-terminus, the 1165-residue chain is MLEGPILAVSRQTKSVVDIPGAPQRYSFAKVSAPIEVPGLLDLQLDSYSWLIGTPEWRARQKEEFGEGARVTSGLENILEELSPIQDYSGNMSLSLSEPRFEDVKNTIDEAKEKDINYAAPLYVTAEFVNNTTGEIKSQTVFIGDFPMMTDKGTFIINGTERVVVSQLVRSPGVYFDQTIDKSTERPLHAVKVIPSRGAWLEFDVDKRDSVGVRIDRKRRQPVTVLLKALGWTTEQITERFGFSEIMMSTLESDGVANTDEALLEIYRKQRPGEQPTRDLAQSLLDNSFFRAKRYDLARVGRYKINRKLGLGGDHDGLMTLTEEDIATTIEYLVRLHAGERVMTSPNGEEIPVETDDIDHFGNRRLRTVGELIQNQVRVGLSRMERVVRERMTTQDAESITPTSLINVRPVSAAIREFFGTSQLSQFMDQNNSLSGLTHKRRLSALGPGGLSRERAGIEVRDVHPSHYGRMCPIETPEGPNIGLIGSLASYARVNPFGFIETPYRRIIDGKLTDQIDYLTADEEDRFVVAQANTHYDEEGNITDETVTVRLKDGDIAMVGRNAVDYMDVSPRQMVSVGTAMIPFLEHDDANRALMGANMQKQAVPLIRAEAPFVGTGMEQRAAYDAGDLVITPVAGVVENVSADFITIMADDGKRETYLLRKFQRTNQGTSYNQKPLVNLGERVEAGQVIADGPGTFNGEMSLGRNLLVAFMPWEGHNYEDAIILNQNIVEQDILTSIHIEEHEIDARDTKLGAEEITRDIPNVSEEVLKDLDDRGIVRIGADVRDGDILVGKVTPKGETELTPEERLLRAIFGEKAREVRDTSMKVPHGETGKVIGVRHFSREDDDDLAPGVNEMIRIYVAQKRKIQDGDKLAGRHGNKGVVGKILPQEDMPFLPDGTPVDIILNTHGVPRRMNIGQVLETHLGWLASAGWSVDPEDPENAELVKTLPADLLEVPAGSLTATPVFDGASNEELSGLLANSRPNRDGDVMVNADGKATLIDGRSGEPYPYPVSIGYMYMLKLHHLVDEKIHARSTGPYSMITQQPLGGKAQFGGQRFGEMEVWAMQAYGAAYTLQELLTIKSDDVVGRVKVYEAIVKGENIPDPGIPESFKVLLKELQSLCLNVEVLSADGTPMELAGDDDDFDQAGASLGINLSRDERSDADTA.

This sequence belongs to the RNA polymerase beta chain family. As to quaternary structure, the RNAP catalytic core consists of 2 alpha, 1 beta, 1 beta' and 1 omega subunit. When a sigma factor is associated with the core the holoenzyme is formed, which can initiate transcription.

It carries out the reaction RNA(n) + a ribonucleoside 5'-triphosphate = RNA(n+1) + diphosphate. Its function is as follows. DNA-dependent RNA polymerase catalyzes the transcription of DNA into RNA using the four ribonucleoside triphosphates as substrates. The polypeptide is DNA-directed RNA polymerase subunit beta (Corynebacterium glutamicum (strain R)).